The sequence spans 463 residues: MKTVSVKEIYRQTEQYAGQSIRVEGWIRTLRASKAFGFIELNDGTFFKNIQIVFDEDLHNFSDVSKFTISSAIIIEGTLEITPGAKQPFEIKATNVELEAHSHKDYPLQKKRHTFEYLRQIAHLRPRSNAFSAVFRVRSIAAFAIHQFFQEKGFVYTHTPIVTGSDAEGAGEMFRVSTLDFKNIPLDEEQQVDFKKDFFGKETSLTVSGQLAAEAYALAFKKVYTFGPTFRAENSNTARHASEFWMIEPEIAFADLQDNMELAEDMLKYMIRYVMEQAPEELEFFNQFVDKGLIDRLNHVANSEFGKVTYTEAVKMLQESGEEFEYPVEWGHDLQTEHERYLTEKVFKKPVFVMDYPKDIKAFYMRMNDDNKTVAAMDLLVPGIGEIIGGSQREERLDVLTDRMKQMGLDEEEYWWYLELRKYGGVKHAGYGLGFERAIMYLTGMANIRDVISYPRTPKSAEF.

The protein belongs to the class-II aminoacyl-tRNA synthetase family. In terms of assembly, homodimer.

The protein localises to the cytoplasm. It catalyses the reaction tRNA(Asn) + L-asparagine + ATP = L-asparaginyl-tRNA(Asn) + AMP + diphosphate + H(+). This Alkaliphilus metalliredigens (strain QYMF) protein is Asparagine--tRNA ligase.